We begin with the raw amino-acid sequence, 491 residues long: Glutamyl-tRNA(Gln) amidotransferase subunit A (491 aa).

Active-site charge relay system residues include Lys-80 and Ser-155. Ser-179 serves as the catalytic Acyl-ester intermediate.

The protein belongs to the amidase family. GatA subfamily. In terms of assembly, heterotrimer of A, B and C subunits.

The catalysed reaction is L-glutamyl-tRNA(Gln) + L-glutamine + ATP + H2O = L-glutaminyl-tRNA(Gln) + L-glutamate + ADP + phosphate + H(+). Its function is as follows. Allows the formation of correctly charged Gln-tRNA(Gln) through the transamidation of misacylated Glu-tRNA(Gln) in organisms which lack glutaminyl-tRNA synthetase. The reaction takes place in the presence of glutamine and ATP through an activated gamma-phospho-Glu-tRNA(Gln). In Salinispora arenicola (strain CNS-205), this protein is Glutamyl-tRNA(Gln) amidotransferase subunit A.